The following is a 365-amino-acid chain: tRNA dimethylallyltransferase (365 aa).

23–30 (APTASGKT) serves as a coordination point for ATP. Substrate is bound at residue 25-30 (TASGKT). 3 interaction with substrate tRNA regions span residues 48 to 51 (DSAL), 172 to 176 (QRITR), and 256 to 261 (RCVGYR).

Belongs to the IPP transferase family. In terms of assembly, monomer. Mg(2+) serves as cofactor.

It catalyses the reaction adenosine(37) in tRNA + dimethylallyl diphosphate = N(6)-dimethylallyladenosine(37) in tRNA + diphosphate. Functionally, catalyzes the transfer of a dimethylallyl group onto the adenine at position 37 in tRNAs that read codons beginning with uridine, leading to the formation of N6-(dimethylallyl)adenosine (i(6)A). In Psychrobacter sp. (strain PRwf-1), this protein is tRNA dimethylallyltransferase.